The following is a 211-amino-acid chain: ATP phosphoribosyltransferase (211 aa).

The protein belongs to the ATP phosphoribosyltransferase family. Short subfamily. Heteromultimer composed of HisG and HisZ subunits.

Its subcellular location is the cytoplasm. The enzyme catalyses 1-(5-phospho-beta-D-ribosyl)-ATP + diphosphate = 5-phospho-alpha-D-ribose 1-diphosphate + ATP. It participates in amino-acid biosynthesis; L-histidine biosynthesis; L-histidine from 5-phospho-alpha-D-ribose 1-diphosphate: step 1/9. Its function is as follows. Catalyzes the condensation of ATP and 5-phosphoribose 1-diphosphate to form N'-(5'-phosphoribosyl)-ATP (PR-ATP). Has a crucial role in the pathway because the rate of histidine biosynthesis seems to be controlled primarily by regulation of HisG enzymatic activity. This Bacillus cereus (strain AH187) protein is ATP phosphoribosyltransferase.